The following is a 264-amino-acid chain: MLKKSIGIFYRCFYLNNKCDYYLIFLAPFSLFTQIFMVITALISVANSGQMSLIWFTNFDTFTYQSNSLAIFLVWYYFLNHKSRWFENSSLVLSVTGYLVFTVIFFNFYALSRFTGIVNIEPDVQGWFSTITTQLPYSFNGSFINDWNAFSELLLHVIHPLFYFIYVGLLFKTYKFIKPPRNLQSFLLKAGIYPSIYAFYLQTIPFLNVWDNGENSYSVYGFFTQTKYNSYVWIWSIPIFASMFLILWMLFVINNHYYGKKHHK.

6 consecutive transmembrane segments (helical) span residues 23–43 (LIFLAPFSLFTQIFMVITALI), 59–79 (FDTFTYQSNSLAIFLVWYYFL), 91–111 (LVLSVTGYLVFTVIFFNFYAL), 150–170 (FSELLLHVIHPLFYFIYVGLL), 190–210 (AGIYPSIYAFYLQTIPFLNVW), and 233–253 (WIWSIPIFASMFLILWMLFVI).

It is found in the cell membrane. This is an uncharacterized protein from Mycoplasma genitalium (strain ATCC 33530 / DSM 19775 / NCTC 10195 / G37) (Mycoplasmoides genitalium).